Reading from the N-terminus, the 360-residue chain is DNA replication and repair protein RecF (360 aa).

30 to 37 provides a ligand contact to ATP; it reads GQNGSGKT.

Belongs to the RecF family.

The protein localises to the cytoplasm. In terms of biological role, the RecF protein is involved in DNA metabolism; it is required for DNA replication and normal SOS inducibility. RecF binds preferentially to single-stranded, linear DNA. It also seems to bind ATP. The chain is DNA replication and repair protein RecF from Shewanella putrefaciens (strain CN-32 / ATCC BAA-453).